We begin with the raw amino-acid sequence, 79 residues long: Defensin-like protein 272 (79 aa).

An N-terminal signal peptide occupies residues Met-1–Ser-24. 4 disulfides stabilise this stretch: Cys-34–Cys-77, Cys-43–Cys-63, Cys-49–Cys-75, and Cys-53–Cys-76.

It belongs to the DEFL family.

Its subcellular location is the secreted. The protein is Defensin-like protein 272 of Arabidopsis thaliana (Mouse-ear cress).